A 361-amino-acid chain; its full sequence is Free fatty acid receptor 4 (361 aa).

Residues methionine 1–threonine 45 lie on the Extracellular side of the membrane. Residue asparagine 21 is glycosylated (N-linked (GlcNAc...) asparagine). The chain crosses the membrane as a helical span at residues valine 46–alanine 66. At arginine 67–leucine 77 the chain is on the cytoplasmic side. The helical transmembrane segment at valine 78–valine 98 threads the bilayer. Topologically, residues arginine 99–histidine 112 are extracellular. A disulfide bridge links cysteine 111 with cysteine 194. A helical membrane pass occupies residues leucine 113–serine 133. Over leucine 134 to alanine 156 the chain is Cytoplasmic. The helical transmembrane segment at valine 157–phenylalanine 177 threads the bilayer. The Extracellular segment spans residues arginine 178–glutamate 204. A helical transmembrane segment spans residues isoleucine 205–isoleucine 225. At serine 226–leucine 268 the chain is on the cytoplasmic side. The chain crosses the membrane as a helical span at residues leucine 269–isoleucine 289. The Extracellular portion of the chain corresponds to glutamine 290–aspartate 295. Residues leucine 296–leucine 316 form a helical membrane-spanning segment. The Cytoplasmic segment spans residues asparagine 317–glycine 361. Phosphothreonine occurs at positions 347 and 349. Serine 350, serine 357, and serine 360 each carry phosphoserine.

The protein belongs to the G-protein coupled receptor 1 family. In terms of assembly, interacts (via C-terminus) with ARRB2 following LCFAs stimulation. Post-translationally, phosphorylated at two clusters of Ser and Thr residues located in the intracellular C-terminus. Prerequisite for FFAR4 internalization via an ARRB2-dependent pathway. As to expression, highly expressed in lung and colon.

The protein resides in the cell membrane. The protein localises to the endosome membrane. It is found in the lysosome membrane. Its subcellular location is the cell projection. It localises to the cilium membrane. Functionally, G-protein-coupled receptor for long-chain fatty acids (LCFAs) with a major role in adipogenesis, energy metabolism and inflammation. Signals via G-protein and beta-arrestin pathways. LCFAs sensing initiates activation of phosphoinositidase C-linked G proteins GNAQ and GNA11 (G(q)/G(11)), inducing a variety of cellular responses via second messenger pathways such as intracellular calcium mobilization, modulation of cyclic adenosine monophosphate (cAMP) production, and mitogen-activated protein kinases (MAPKs). After LCFAs binding, associates with beta-arrestin ARRB2 that acts as an adapter protein coupling the receptor to specific downstream signaling pathways, as well as mediating receptor endocytosis. In response to dietary fats, plays an important role in the regulation of adipocyte proliferation and differentiation. Acts as a receptor for omega-3 polyunsaturated fatty acids (PUFAs) at primary cilium of perivascular preadipocytes, initiating an adipogenic program via cAMP and CTCF-dependent chromatin remodeling that ultimately results in transcriptional activation of adipogenic genes and cell cycle entry. Induces differentiation of brown and beige adipocytes probably via autocrine and endocrine functions of FGF21 hormone. Contributes to the thermogenic activation of brown adipose tissue and the browning of white adipose tissue. Activates brown adipocytes by initiating intracellular calcium signaling leading to mitochondrial depolarization and fission, and overall increased mitochondrial respiration. Consequently stimulates fatty acid uptake and oxidation in mitochondria together with UCP1-mediated thermogenic respiration, eventually reducing fat mass. Regulates bi-potential differentiation of bone marrow mesenchymal stem cells toward osteoblasts or adipocytes likely by up-regulating distinct integrins. In response to dietary fats regulates hormone secretion and appetite. Stimulates GIP and GLP1 secretion from enteroendocrine cells as well as GCG secretion in pancreatic alpha cells, thereby playing a role in the regulation of blood glucose levels. Negatively regulates glucose-induced SST secretion in pancreatic delta cells. Mediates LCFAs inhibition of GHRL secretion, an appetite-controlling hormone. In taste buds, contributes to sensing of dietary fatty acids by the gustatory system. During the inflammatory response, promotes anti-inflammatory M2 macrophage differentiation in adipose tissue. Mediates the anti-inflammatory effects of omega-3 PUFAs via inhibition of NLRP3 inflammasome activation. In this pathway, interacts with adapter protein ARRB2 and inhibits the priming step triggered by Toll-like receptors (TLRs) at the level of TAK1 and TAB1. Further inhibits the activation step when ARRB2 directly associates with NLRP3, leading to inhibition of pro-inflammatory cytokine release. Mediates LCFAs anti-apoptotic effects. The protein is Free fatty acid receptor 4 (FFAR4) of Macaca fascicularis (Crab-eating macaque).